The primary structure comprises 334 residues: Methionine adenosyltransferase 2 subunit beta (334 aa).

NADP(+) is bound by residues 37 to 40 (TGLL), 60 to 62 (FRR), 71 to 72 (NL), C93, R97, Y159, and L185. A Phosphothreonine modification is found at T309. A required for interaction with MAT2A region spans residues 319-334 (LWPFLIDKRWRQTVFH).

It belongs to the dTDP-4-dehydrorhamnose reductase family. MAT2B subfamily. In terms of assembly, heterotrimer; composed of a catalytic MAT2A homodimer that binds one regulatory MAT2B chain. Heterohexamer; composed of a central, catalytic MAT2A homotetramer flanked on either side by a regulatory MAT2B chain. NADP binding increases the affinity for MAT2A.

It functions in the pathway amino-acid biosynthesis; S-adenosyl-L-methionine biosynthesis; S-adenosyl-L-methionine from L-methionine: step 1/1. Functionally, regulatory subunit of S-adenosylmethionine synthetase 2, an enzyme that catalyzes the formation of S-adenosylmethionine from methionine and ATP. Regulates MAT2A catalytic activity by changing its kinetic properties, increasing its affinity for L-methionine. Can bind NADP (in vitro). This chain is Methionine adenosyltransferase 2 subunit beta (Mat2b), found in Rattus norvegicus (Rat).